We begin with the raw amino-acid sequence, 181 residues long: MSSLSVYHVSSPDIPNKVLTHLEDIASTLAEHGVAFDRWEAATPITPGASQEEVINAYRTQIDTLMTRHGYVTVDVISLNSDHPQKAELRARFLEEHRHGEDEVRFFVAGRGLFTLHIDDYVYAVLCEKNDLISVPAGTRHWFDMGENPHFVAIRLFNNPDGWVANFTGEDIAGRFPRLED.

Residues His-97, His-99, Glu-103, and His-141 each contribute to the Fe(2+) site. Ni(2+)-binding residues include His-97, His-99, Glu-103, and His-141.

This sequence belongs to the acireductone dioxygenase (ARD) family. As to quaternary structure, monomer. It depends on Fe(2+) as a cofactor. The cofactor is Ni(2+).

It catalyses the reaction 1,2-dihydroxy-5-(methylsulfanyl)pent-1-en-3-one + O2 = 3-(methylsulfanyl)propanoate + CO + formate + 2 H(+). It carries out the reaction 1,2-dihydroxy-5-(methylsulfanyl)pent-1-en-3-one + O2 = 4-methylsulfanyl-2-oxobutanoate + formate + 2 H(+). Its pathway is amino-acid biosynthesis; L-methionine biosynthesis via salvage pathway; L-methionine from S-methyl-5-thio-alpha-D-ribose 1-phosphate: step 5/6. In terms of biological role, catalyzes 2 different reactions between oxygen and the acireductone 1,2-dihydroxy-3-keto-5-methylthiopentene (DHK-MTPene) depending upon the metal bound in the active site. Fe-containing acireductone dioxygenase (Fe-ARD) produces formate and 2-keto-4-methylthiobutyrate (KMTB), the alpha-ketoacid precursor of methionine in the methionine recycle pathway. Ni-containing acireductone dioxygenase (Ni-ARD) produces methylthiopropionate, carbon monoxide and formate, and does not lie on the methionine recycle pathway. The chain is Acireductone dioxygenase from Pseudomonas syringae pv. tomato (strain ATCC BAA-871 / DC3000).